Here is a 184-residue protein sequence, read N- to C-terminus: Cbp/p300-interacting transactivator 4 (184 aa).

Low complexity predominate over residues P18–A28. Disordered stretches follow at residues P18–F67 and T94–A128. The segment covering P104–A126 has biased composition (pro residues).

Belongs to the CITED family. As to quaternary structure, interacts via its C-terminal region with the CH1 domain of CREBBP and EP300. Interacts with all TFAP2/AP-2 isoforms. In terms of tissue distribution, expressed in most tissues examined with highest levels of expression in heart, liver, skeletal muscle and pancreas. Also expressed in bladder cell line ECV-304 and in various breast cancer cell lines. Also detected in both in situ and invasive breast tumors where its expression is down-regulated and mostly restricted to the cytoplasm of malignant epithelium. Down-regulation of expression is associated with elevated levels of HIF1A and increased tumor growth and angiogenesis.

It localises to the nucleus. The protein resides in the cytoplasm. Functionally, acts as a transcriptional coactivator for TFAP2/AP-2. Enhances estrogen-dependent transactivation mediated by estrogen receptors. May function as an inhibitor of transactivation by HIF1A by disrupting HIF1A interaction with CREBBP. May be involved in regulation of gene expression during development and differentiation of blood cells, endothelial cells and mammary epithelial cells. This is Cbp/p300-interacting transactivator 4 from Homo sapiens (Human).